The primary structure comprises 183 residues: CKLF-like MARVEL transmembrane domain-containing protein 6 (183 aa).

M1 carries the post-translational modification N-acetylmethionine. Over 1–39 (MENGAVYSPTTEEDPGPARGPRSGLAAYFFMGRLPLLRR) the chain is Cytoplasmic. S8 is subject to Phosphoserine. Positions 33–160 (RLPLLRRVLK…DFITMLYEKR (128 aa)) constitute an MARVEL domain. Residues 40 to 60 (VLKGLQLLLSLLAFICEEVVS) form a helical membrane-spanning segment. At 61–67 (QCTLCGG) the chain is on the extracellular side. Residues 68–88 (LYFFEFVSCSAFLLSLLILIV) traverse the membrane as a helical segment. Topologically, residues 89–106 (YCTPFYERVDTTKVKSSD) are cytoplasmic. Residues 107–127 (FYITLGTGCVFLLASIIFVST) form a helical membrane-spanning segment. Over 128 to 134 (HDRTSAE) the chain is Extracellular. A helical transmembrane segment spans residues 135 to 155 (IAAIVFGFIASFMFLLDFITM). The Cytoplasmic segment spans residues 156–183 (LYEKRQESQLRKPENTTRAEALTEPLNA). At T171 the chain carries Phosphothreonine.

It belongs to the chemokine-like factor family. As to quaternary structure, interacts with PD-L1/CD274 (via transmembrane domain); the interaction is direct. Interacts with CMTM4. Interacts with CD58, ARG1, ENO1 and TMPO. Expressed in the leukocytes, placenta and testis.

The protein localises to the cell membrane. It is found in the early endosome membrane. The protein resides in the recycling endosome membrane. Its function is as follows. Master regulator of recycling and plasma membrane expression of PD-L1/CD274, an immune inhibitory ligand critical for immune tolerance to self and antitumor immunity. Associates with both constitutive and IFNG-induced PD-L1/CD274 at recycling endosomes, where it protects PD-L1/CD274 from being targeted for lysosomal degradation, likely by preventing its STUB1-mediated ubiquitination. May stabilize PD-L1/CD274 expression on antigen presenting cells and potentiates inhibitory signaling by PDCD1/CD279, its receptor on T-cells, ultimately triggering T-cell anergy. The protein is CKLF-like MARVEL transmembrane domain-containing protein 6 of Homo sapiens (Human).